Reading from the N-terminus, the 212-residue chain is Glycerol-3-phosphate acyltransferase (212 aa).

The next 5 helical transmembrane spans lie at 3–23 (ILLAALVAYLIGSVSFAVIVS), 51–71 (KAAILTLVGDAFKGWLAVWLA), 78–98 (DVAVAWVAIAVFVGHLYPVFF), 115–135 (AVHPVLGLATALTWLIVAFFF), and 139–159 (SLAALVAAVFAPVFDVFLFGT).

This sequence belongs to the PlsY family. As to quaternary structure, probably interacts with PlsX.

It is found in the cell inner membrane. The enzyme catalyses an acyl phosphate + sn-glycerol 3-phosphate = a 1-acyl-sn-glycero-3-phosphate + phosphate. It participates in lipid metabolism; phospholipid metabolism. Its function is as follows. Catalyzes the transfer of an acyl group from acyl-phosphate (acyl-PO(4)) to glycerol-3-phosphate (G3P) to form lysophosphatidic acid (LPA). This enzyme utilizes acyl-phosphate as fatty acyl donor, but not acyl-CoA or acyl-ACP. The protein is Glycerol-3-phosphate acyltransferase of Burkholderia vietnamiensis (strain G4 / LMG 22486) (Burkholderia cepacia (strain R1808)).